We begin with the raw amino-acid sequence, 353 residues long: Phosphate acyltransferase (353 aa).

Belongs to the PlsX family. As to quaternary structure, homodimer. Probably interacts with PlsY.

The protein localises to the cytoplasm. It carries out the reaction a fatty acyl-[ACP] + phosphate = an acyl phosphate + holo-[ACP]. The protein operates within lipid metabolism; phospholipid metabolism. In terms of biological role, catalyzes the reversible formation of acyl-phosphate (acyl-PO(4)) from acyl-[acyl-carrier-protein] (acyl-ACP). This enzyme utilizes acyl-ACP as fatty acyl donor, but not acyl-CoA. In Nitrosospira multiformis (strain ATCC 25196 / NCIMB 11849 / C 71), this protein is Phosphate acyltransferase.